Here is an 841-residue protein sequence, read N- to C-terminus: MRGSNLFQLTLALLLSLVAAEDGYNGWLRYAPVSCDLHCRQALPSHIVLLNSTKGSPIETAGRELKAGFQSILSTNLTFHPFQCDSSASILVATLDEYRQKCRDINLPELDPDGFWLQSEGDTVRILGNNARGALYGAYEYLAMVAQRNFSRVAYTTNPHAPIRWVNQWDNMDGSIERGYGGASIFFKDGTVVEDMAPVEQYARLLASIRINAIVVNNVNANATLLLPENMKGLGRIADACRPYGVQIGISLNFASPESLGGLETYDPLDPGVIAWWQNITDSLYTYVPDMAGYLVKADSEGQPGPDTYNRTLSQGANLFARALQPHGGVLMYRAFVYNDNLNESDWKADRAKAAVEYFKDLDGQFYENVVVQIKYGPIDFQVREPTSPLFANLYQTNTAIELEVSQEYLGQQCHLVYLPPLWKTVLDFDLRVDHKPSMVRDILSGQRFNRTLGGWAAVVNVGTNRTWLGSHLAMSNLYAYGRLAWSPTDDSEQILKDWTRLTFGQNRQVIDTIADMPMTSWPAYENYTGNLGIQTLTDILYTHYGPNPATQDNNGWGQWTRADHNSVGMDRTISNGTGYTGQYPEEVARLYESLETTPDDLVLWFHHVPWTHRLHSGLTVIQHFYNAHYAGSEAAHGFIRQWESLKGLIDRERYEAMRSRLVYQAGHSIVWRDAINNFYYNMTGIPDVAGRVGHHPWRIEAESMRLDGYQTYTVSPFEAASNTTAIITTSNSTTGTARTTIKAPSGVYDIGVNYYDLYGGQSKWTLSVGDKVVGQWLGDMEHQSLGHTPSIYLDGHSATRITFHGVVVRQGDQLKIVGEANGVEPAPVDYVVLLPPGVVD.

An N-terminal signal peptide occupies residues 1–20 (MRGSNLFQLTLALLLSLVAA). 14 N-linked (GlcNAc...) asparagine glycosylation sites follow: N51, N76, N149, N222, N279, N310, N343, N450, N465, N527, N576, N682, N723, and N732.

It belongs to the glycosyl hydrolase 67 family.

It localises to the secreted. It carries out the reaction an alpha-D-glucuronoside + H2O = D-glucuronate + an alcohol. In terms of biological role, alpha-glucuronidase involved in the hydrolysis of xylan, a major structural heterogeneous polysaccharide found in plant biomass representing the second most abundant polysaccharide in the biosphere, after cellulose. Releases 4-O-methylglucuronic acid from xylan. The chain is Alpha-glucuronidase A (aguA) from Aspergillus tubingensis.